Here is a 245-residue protein sequence, read N- to C-terminus: 1-(5-phosphoribosyl)-5-[(5-phosphoribosylamino)methylideneamino] imidazole-4-carboxamide isomerase (245 aa).

Aspartate 7 acts as the Proton acceptor in catalysis. The Proton donor role is filled by aspartate 129.

This sequence belongs to the HisA/HisF family.

It is found in the cytoplasm. The catalysed reaction is 1-(5-phospho-beta-D-ribosyl)-5-[(5-phospho-beta-D-ribosylamino)methylideneamino]imidazole-4-carboxamide = 5-[(5-phospho-1-deoxy-D-ribulos-1-ylimino)methylamino]-1-(5-phospho-beta-D-ribosyl)imidazole-4-carboxamide. Its pathway is amino-acid biosynthesis; L-histidine biosynthesis; L-histidine from 5-phospho-alpha-D-ribose 1-diphosphate: step 4/9. This Shewanella oneidensis (strain ATCC 700550 / JCM 31522 / CIP 106686 / LMG 19005 / NCIMB 14063 / MR-1) protein is 1-(5-phosphoribosyl)-5-[(5-phosphoribosylamino)methylideneamino] imidazole-4-carboxamide isomerase.